Consider the following 195-residue polypeptide: dTTP/UTP pyrophosphatase (195 aa).

D70 acts as the Proton acceptor in catalysis.

Belongs to the Maf family. YhdE subfamily. The cofactor is a divalent metal cation.

The protein localises to the cytoplasm. It catalyses the reaction dTTP + H2O = dTMP + diphosphate + H(+). It carries out the reaction UTP + H2O = UMP + diphosphate + H(+). Its function is as follows. Nucleoside triphosphate pyrophosphatase that hydrolyzes dTTP and UTP. May have a dual role in cell division arrest and in preventing the incorporation of modified nucleotides into cellular nucleic acids. The chain is dTTP/UTP pyrophosphatase from Photorhabdus laumondii subsp. laumondii (strain DSM 15139 / CIP 105565 / TT01) (Photorhabdus luminescens subsp. laumondii).